A 136-amino-acid polypeptide reads, in one-letter code: Aspartate 1-decarboxylase (136 aa).

S25 serves as the catalytic Schiff-base intermediate with substrate; via pyruvic acid. S25 carries the pyruvic acid (Ser) modification. Position 57 (T57) interacts with substrate. Y58 serves as the catalytic Proton donor. 73–75 is a binding site for substrate; it reads GAA.

This sequence belongs to the PanD family. In terms of assembly, heterooctamer of four alpha and four beta subunits. Pyruvate is required as a cofactor. Is synthesized initially as an inactive proenzyme, which is activated by self-cleavage at a specific serine bond to produce a beta-subunit with a hydroxyl group at its C-terminus and an alpha-subunit with a pyruvoyl group at its N-terminus.

Its subcellular location is the cytoplasm. The enzyme catalyses L-aspartate + H(+) = beta-alanine + CO2. Its pathway is cofactor biosynthesis; (R)-pantothenate biosynthesis; beta-alanine from L-aspartate: step 1/1. Its function is as follows. Catalyzes the pyruvoyl-dependent decarboxylation of aspartate to produce beta-alanine. The protein is Aspartate 1-decarboxylase of Corynebacterium glutamicum (strain R).